Reading from the N-terminus, the 628-residue chain is Cystathionine gamma-synthase-like enzyme iboG2 (628 aa).

Substrate is bound at residue Y313. An N6-(pyridoxal phosphate)lysine modification is found at K417.

The protein belongs to the trans-sulfuration enzymes family. The cofactor is pyridoxal 5'-phosphate.

It functions in the pathway secondary metabolite biosynthesis. Functionally, cystathionine gamma-synthase-like enzyme; part of the gene cluster that mediates the biosynthesis of the psychoactive metabolites ibotenic acid and muscimol. The first committed step is glutamate hydroxylation by the 2-oxoglutarate-dependent dioxygenase iboH, and the last step is decarboxylation of ibotenic acid to muscimol by the decarboxylase iboD. The order of the intermediate reactions is somewhat ambiguous. IboA likely activates the carboxylic acid at position 5 to introduce an amide bond, and the flavin monooxygenase iboF generates the N-O bond. There are several options for the latter step. One option is that iboF directly hydroxylates the amide nitrogen formed by iboA to produce a hydroxamic acid species. Another option is that iboF hydroxylates an external N-containing compound, whose resulting N-O bond is subsequently introduced into the hydroxyglutamate scaffold. The paralogous PLP-dependent cystathionine gamma-synthase-like enzymes iboG1 and iboG2 are likely involved in substitution of the OH group at position 3 by the O-N moiety. The first cyclic intermediate is most probably tricholomic acid which is likely desaturated to ibotenic acid by the cytochrome P450 monooxygenase iboC. This chain is Cystathionine gamma-synthase-like enzyme iboG2, found in Amanita muscaria (strain Koide BX008).